Reading from the N-terminus, the 222-residue chain is UPF0173 metal-dependent hydrolase Kcr_0055 (222 aa).

Belongs to the UPF0173 family.

In Korarchaeum cryptofilum (strain OPF8), this protein is UPF0173 metal-dependent hydrolase Kcr_0055.